The primary structure comprises 160 residues: Sperm acrosome-associated protein 5 (160 aa).

Positions 1–21 are cleaved as a signal peptide; sequence MKVCSIVVVILAVLLIAKLDA. The region spanning 22–150 is the C-type lysozyme domain; that stretch reads KIYERCELAK…SEWLKGCSVR (129 aa). 4 disulfide bridges follow: cysteine 27–cysteine 147, cysteine 51–cysteine 135, cysteine 85–cysteine 100, and cysteine 96–cysteine 114. Glutamate 56 is an active-site residue.

This sequence belongs to the glycosyl hydrolase 22 family.

Its subcellular location is the secreted. The enzyme catalyses Hydrolysis of (1-&gt;4)-beta-linkages between N-acetylmuramic acid and N-acetyl-D-glucosamine residues in a peptidoglycan and between N-acetyl-D-glucosamine residues in chitodextrins.. The sequence is that of Sperm acrosome-associated protein 5 (Spaca5) from Mus musculus (Mouse).